The primary structure comprises 57 residues: Small ribosomal subunit protein bS21 (57 aa).

Positions 34-57 (RKEHYIKPSVQKKNRQKNMRSKKR) are disordered. A compositionally biased stretch (basic residues) spans 43-57 (VQKKNRQKNMRSKKR).

Belongs to the bacterial ribosomal protein bS21 family.

The polypeptide is Small ribosomal subunit protein bS21 (Aster yellows witches'-broom phytoplasma (strain AYWB)).